Here is a 460-residue protein sequence, read N- to C-terminus: V-type ATP synthase beta chain 2 (460 aa).

This sequence belongs to the ATPase alpha/beta chains family.

Produces ATP from ADP in the presence of a proton gradient across the membrane. The V-type beta chain is a regulatory subunit. In Clostridium tetani (strain Massachusetts / E88), this protein is V-type ATP synthase beta chain 2.